We begin with the raw amino-acid sequence, 355 residues long: Putative beta-lactamase HcpE (355 aa).

The first 22 residues, 1–22 (MNIKILKILVGGLFFLSLNAHL), serve as a signal peptide directing secretion. 8 TPR repeats span residues 27 to 60 (DNSFLGIGERAYKSGNYSKAASYFKKACNDGVSE), 63 to 96 (TQLGIIYENGQGTRIDYKKALEYYKTACQADDRE), 98 to 131 (CFGLGGLYDEGLGTAQNYQEAIDAYAKACVLKHP), 132 to 166 (ESCYNLGIIYDRKIKGNAAQAVTYYQKSCNFDMAK), 202 to 240 (GQACRALGSLFENGDAGLDEDFEVAFDYLQKACALNNSG), 245 to 275 (LGSMYMLGRYVKKDPQKAFNYFKQACDMGSA), 276 to 311 (VSCSRMGFMYSQGDTVSKDLRKALDNYERGCDMGDE), and 312 to 344 (VGCFALAGMYYNMKDKENAIMIYDKGCKLGMKQ). Cystine bridges form between cysteine 54–cysteine 62, cysteine 90–cysteine 98, cysteine 126–cysteine 134, cysteine 160–cysteine 168, cysteine 197–cysteine 205, cysteine 234–cysteine 242, cysteine 270–cysteine 278, cysteine 306–cysteine 314, and cysteine 338–cysteine 346.

The protein belongs to the hcp beta-lactamase family.

The protein localises to the secreted. The enzyme catalyses a beta-lactam + H2O = a substituted beta-amino acid. In terms of biological role, may hydrolyze 6-aminopenicillinic acid and 7-aminocephalosporanic acid (ACA) derivatives. This Helicobacter pylori (strain J99 / ATCC 700824) (Campylobacter pylori J99) protein is Putative beta-lactamase HcpE (hcpE).